A 514-amino-acid chain; its full sequence is piRNA biogenesis protein EXD1 (514 aa).

A 3'-5' exonuclease domain is found at 30–122 (LHAERTWMEK…HGKLCWLQVA (93 aa)). Residues 384-422 (SLNKQATNPQHLPPTEEGETSEDSSNKLICTKSKGSEDQ) form a disordered region.

Belongs to the EXD1 family. Homodimer. Component of the PET complex, at least composed of EXD1, PIWIL2, TDRD12 and piRNAs.

The protein resides in the cytoplasm. Functionally, RNA-binding component of the PET complex, a multiprotein complex required for the processing of piRNAs during spermatogenesis. The piRNA metabolic process mediates the repression of transposable elements during meiosis by forming complexes composed of piRNAs and Piwi proteins and governs the methylation and subsequent repression of transposable elements, preventing their mobilization, which is essential for the germline integrity. The PET complex is required during the secondary piRNAs metabolic process for the PIWIL2 slicing-triggered loading of PIWIL4 piRNAs. In the PET complex, EXD1 probably acts as an RNA adapter. EXD1 is an inactive exonuclease. This Homo sapiens (Human) protein is piRNA biogenesis protein EXD1 (EXD1).